The following is a 334-amino-acid chain: Holliday junction branch migration complex subunit RuvB (334 aa).

Residues 4–184 are large ATPase domain (RuvB-L); sequence ADRLIQPQLQ…FGIPLRLEFY (181 aa). Residues R24, G65, K68, T69, T70, 131–133, R174, Y184, and R221 each bind ATP; that span reads EDY. T69 is a Mg(2+) binding site. A small ATPAse domain (RuvB-S) region spans residues 185–255; that stretch reads NVKDLSTIVT…VAELALNLLD (71 aa). The tract at residues 258–334 is head domain (RuvB-H); it reads GEGFDYMDRK…YVHFGMIKPE (77 aa). Residues R294, R313, and R318 each contribute to the DNA site.

The protein belongs to the RuvB family. As to quaternary structure, homohexamer. Forms an RuvA(8)-RuvB(12)-Holliday junction (HJ) complex. HJ DNA is sandwiched between 2 RuvA tetramers; dsDNA enters through RuvA and exits via RuvB. An RuvB hexamer assembles on each DNA strand where it exits the tetramer. Each RuvB hexamer is contacted by two RuvA subunits (via domain III) on 2 adjacent RuvB subunits; this complex drives branch migration. In the full resolvosome a probable DNA-RuvA(4)-RuvB(12)-RuvC(2) complex forms which resolves the HJ.

The protein resides in the cytoplasm. It catalyses the reaction ATP + H2O = ADP + phosphate + H(+). Functionally, the RuvA-RuvB-RuvC complex processes Holliday junction (HJ) DNA during genetic recombination and DNA repair, while the RuvA-RuvB complex plays an important role in the rescue of blocked DNA replication forks via replication fork reversal (RFR). RuvA specifically binds to HJ cruciform DNA, conferring on it an open structure. The RuvB hexamer acts as an ATP-dependent pump, pulling dsDNA into and through the RuvAB complex. RuvB forms 2 homohexamers on either side of HJ DNA bound by 1 or 2 RuvA tetramers; 4 subunits per hexamer contact DNA at a time. Coordinated motions by a converter formed by DNA-disengaged RuvB subunits stimulates ATP hydrolysis and nucleotide exchange. Immobilization of the converter enables RuvB to convert the ATP-contained energy into a lever motion, pulling 2 nucleotides of DNA out of the RuvA tetramer per ATP hydrolyzed, thus driving DNA branch migration. The RuvB motors rotate together with the DNA substrate, which together with the progressing nucleotide cycle form the mechanistic basis for DNA recombination by continuous HJ branch migration. Branch migration allows RuvC to scan DNA until it finds its consensus sequence, where it cleaves and resolves cruciform DNA. This chain is Holliday junction branch migration complex subunit RuvB, found in Shewanella oneidensis (strain ATCC 700550 / JCM 31522 / CIP 106686 / LMG 19005 / NCIMB 14063 / MR-1).